An 894-amino-acid polypeptide reads, in one-letter code: Histone-lysine N-methyltransferase PRDM9 (894 aa).

2 disordered regions span residues 1-23 and 143-174; these read MSPE…RKPM and SGSE…LRKK. The KRAB-related domain occupies 23-86; that stretch reads MVKDAFKDIS…RRQAIKLQVD (64 aa). The segment covering 143–164 has biased composition (polar residues); the sequence is SGSEQAQKPVSPSGEASTSGQH. The Zn(2+) site is built by cysteine 205, cysteine 208, cysteine 216, and histidine 219. Residues 244–358 enclose the SET domain; sequence PGLRIGPSGI…PGCELLVWYG (115 aa). S-adenosyl-L-methionine contacts are provided by residues 256–258, tyrosine 291, and 320–321; these read AGL and NC. A substrate-binding site is contributed by 288–294; sequence NNGYSWL. Tyrosine 357 provides a ligand contact to substrate. Residue lysine 368 is modified to N6,N6,N6-trimethyllysine; alternate. Position 368 is an N6-methyllysine; alternate (lysine 368). Residues lysine 372 and lysine 374 each carry the N6-methyllysine modification. The C2H2-type 1 zinc-finger motif lies at 388-411; sequence HPCPSCCLAFSSQKFLSQHVERNH. Positions 390, 393, 406, and 411 each coordinate Zn(2+). The tract at residues 408–469 is disordered; it reads ERNHSSQNFP…SKLLNKRTWQ (62 aa). Positions 444–461 are enriched in basic and acidic residues; sequence PHSRNDKTKGQEIKERSK. Residues 524–546 form a C2H2-type 2; degenerate zinc finger; that stretch reads VKYGECGQGFSVKSDVITHQRTH. 12 C2H2-type zinc fingers span residues 552–574, 580–602, 608–630, 636–658, 664–686, 692–714, 720–742, 748–770, 776–798, 804–826, 832–854, and 860–882; these read YVCR…QRIH, YVCR…QRTH, and YVCR…QRRH. The Zn(2+) site is built by cysteine 722, cysteine 725, histidine 738, histidine 742, cysteine 750, cysteine 753, histidine 766, histidine 770, cysteine 778, cysteine 781, histidine 794, histidine 798, cysteine 806, cysteine 809, histidine 822, and histidine 826. The DNA-binding stretch occupies residues 730–820; it reads SNKSHLLRHQ…RGFSNKSHLL (91 aa).

It belongs to the class V-like SAM-binding methyltransferase superfamily. As to quaternary structure, homodimer. Interacts with EHMT2 and CDYL; interaction only takes place when PRDM9 is bound to hotspot DNA. Interacts with CXXC1; this interaction does not link PRDM9-activated recombination hotspot sites with DSB machinery and is not required for the hotspot recognition pathway. Forms a complex with EWSR1, REC8, SYCP3 and SYCP1; complex formation is dependent of phosphorylated form of REC8 and requires PRDM9 bound to hotspot DNA; EWSR1 joins PRDM9 with the chromosomal axis through REC8. Post-translationally, mono-methylated; automethylated. Tri-methylated; automethylated. Mono-methylation is predominant; automethylation is lower and slower than H3 peptide methylation and is in a highest S-adenosyl-L-methionine concentration-dependent. There are two major sites for automethylation at Lys-368 and Lys-374. Lysines can be simultaneously methylated, such as Lys-368(me3)/Lys-372(me1), Lys-368(me1)/Lys-374(me1) and Lys-368(me1)/Lys-372(me1)/Lys-374(me1). Automethylation is an intramolecular (cis) process.

Its subcellular location is the nucleus. It is found in the chromosome. It carries out the reaction L-lysyl-[protein] + S-adenosyl-L-methionine = N(6)-methyl-L-lysyl-[protein] + S-adenosyl-L-homocysteine + H(+). It catalyses the reaction N(6)-methyl-L-lysyl-[protein] + S-adenosyl-L-methionine = N(6),N(6)-dimethyl-L-lysyl-[protein] + S-adenosyl-L-homocysteine + H(+). The catalysed reaction is L-lysyl(4)-[histone H3] + 3 S-adenosyl-L-methionine = N(6),N(6),N(6)-trimethyl-L-lysyl(4)-[histone H3] + 3 S-adenosyl-L-homocysteine + 3 H(+). The enzyme catalyses L-lysyl(36)-[histone H3] + 3 S-adenosyl-L-methionine = N(6),N(6),N(6)-trimethyl-L-lysyl(36)-[histone H3] + 3 S-adenosyl-L-homocysteine + 3 H(+). It carries out the reaction L-lysyl(9)-[histone H3] + 3 S-adenosyl-L-methionine = N(6),N(6),N(6)-trimethyl-L-lysyl(9)-[histone H3] + 3 S-adenosyl-L-homocysteine + 3 H(+). It catalyses the reaction L-lysyl(20)-[histone H4] + S-adenosyl-L-methionine = N(6)-methyl-L-lysyl(20)-[histone H4] + S-adenosyl-L-homocysteine + H(+). The catalysed reaction is N(6)-methyl-L-lysyl(20)-[histone H4] + S-adenosyl-L-methionine = N(6),N(6)-dimethyl-L-lysyl(20)-[histone H4] + S-adenosyl-L-homocysteine + H(+). With respect to regulation, inhibited by suramin with an IC(50) of 4.1 uM. In terms of biological role, histone methyltransferase that sequentially mono-, di-, and tri-methylates both 'Lys-4' (H3K4) and 'Lys-36' (H3K36) of histone H3 to produce respectively trimethylated 'Lys-4' (H3K4me3) and trimethylated 'Lys-36' (H3K36me3) histone H3 and plays a key role in meiotic prophase by determining hotspot localization thereby promoting meiotic recombination. Can also methylate all four core histones with H3 being the best substrate and the most highly modified. Is also able, on one hand, to mono and di-methylate H4K20 and on other hand to trimethylate H3K9 with the di-methylated H3K9 as the best substrate. During meiotic prophase, binds specific DNA sequences through its zinc finger domains thereby determining hotspot localization where it promotes local H3K4me3 and H3K36me3 enrichment on the same nucleosomes through its histone methyltransferase activity. Thereby promotes double-stranded breaks (DSB) formation, at this subset of PRDM9-binding sites, that initiates meiotic recombination for the proper meiotic progression. During meiotic progression hotspot-bound PRDM9 interacts with several complexes; in early leptonema binds CDYL and EHMT2 followed by EWSR1 and CXXC1 by the end of leptonema. EWSR1 joins PRDM9 with the chromosomal axis through REC8. In this way, controls the DSB repair pathway, pairing of homologous chromosomes and sex body formation. Moreover plays a central role in the transcriptional activation of genes during early meiotic prophase thanks to H3K4me3 and H3K36me3 enrichment that represents a specific tag for epigenetic transcriptional activation. In addition performs automethylation. Acetylation and phosphorylation of histone H3 attenuate or prevent histone H3 methylation. This is Histone-lysine N-methyltransferase PRDM9 from Homo sapiens (Human).